Here is a 402-residue protein sequence, read N- to C-terminus: Multidrug resistance protein MdtH (402 aa).

Transmembrane regions (helical) follow at residues 13-33 (YFLLIDNLLVVLGFFVVFPLI), 34-54 (SIRFVDQLGWAALIVGIALGL), 99-116 (PWILWASCTLSALGGTLF), 139-159 (LLMMQDSAGAVIGALIGSWLL), 165-185 (YVCWAGAALFVLAAAWNAWLL), 214-234 (VLTLTGYYMLAVQVMLMLPIM), 244-264 (AVKWMYAIEAALSLTLLYPIA), 277-297 (LMFGLLLMTLSLFPLGLSTTL), 340-360 (LGLALGGALGYTGGGWMYDMG), and 368-388 (LPWALLGIIGMLTLALLYWQF).

Belongs to the major facilitator superfamily. DHA1 family. MdtH (TC 2.A.1.2.21) subfamily.

The protein resides in the cell inner membrane. In Edwardsiella ictaluri (strain 93-146), this protein is Multidrug resistance protein MdtH.